The following is a 56-amino-acid chain: Cruciferin (56 aa).

A Phosphothreonine modification is found at T45.

It belongs to the 11S seed storage protein (globulins) family. As to quaternary structure, hexamer; each subunit is composed of an acidic and a basic chain derived from a single precursor and linked by a disulfide bond.

In terms of biological role, this is a seed storage protein. The chain is Cruciferin from Sinapis alba (White mustard).